The sequence spans 295 residues: MSVKHFIQITKPGIIFGNVLSVAGGFFLASKGHVDFALFLAVVIGTSLVVASGCVFNNCIDRDIDHKMERTKNRVMVQGGMSLTLALAYATLLGVAGFSLLYVQANPLAAFCALVGFVVYVGFYSLWLKRKSVHGTLVGSLSGAMPPVIGYCAVSNSFDLAAVTLLVMFSLWQMPHSFAIAIFRFKDYSAANIPVLPVARGILAAKKQIVLYVLAFVLATVMLTLGGYAGLGYLAVAAAMGLYWLYMAWGGYKAEDDSKWARKVFGFSILTVTALSVMMSVDSQTAADVLMTYAR.

Transmembrane regions (helical) follow at residues 9–29 (ITKP…FFLA), 36–56 (FALF…GCVF), 83–103 (LTLA…LLYV), 108–128 (LAAF…SLWL), 135–155 (GTLV…CAVS), 163–183 (VTLL…IAIF), 209–229 (IVLY…GGYA), 230–250 (GLGY…MAWG), and 264–284 (VFGF…VDSQ).

Belongs to the UbiA prenyltransferase family. Protoheme IX farnesyltransferase subfamily.

Its subcellular location is the cell inner membrane. It carries out the reaction heme b + (2E,6E)-farnesyl diphosphate + H2O = Fe(II)-heme o + diphosphate. It participates in porphyrin-containing compound metabolism; heme O biosynthesis; heme O from protoheme: step 1/1. In terms of biological role, converts heme B (protoheme IX) to heme O by substitution of the vinyl group on carbon 2 of heme B porphyrin ring with a hydroxyethyl farnesyl side group. This chain is Protoheme IX farnesyltransferase 2, found in Pseudomonas entomophila (strain L48).